A 215-amino-acid chain; its full sequence is NADH-quinone oxidoreductase subunit C (215 aa).

Belongs to the complex I 30 kDa subunit family. In terms of assembly, NDH-1 is composed of 14 different subunits. Subunits NuoB, C, D, E, F, and G constitute the peripheral sector of the complex.

Its subcellular location is the cell inner membrane. It carries out the reaction a quinone + NADH + 5 H(+)(in) = a quinol + NAD(+) + 4 H(+)(out). In terms of biological role, NDH-1 shuttles electrons from NADH, via FMN and iron-sulfur (Fe-S) centers, to quinones in the respiratory chain. The immediate electron acceptor for the enzyme in this species is believed to be ubiquinone. Couples the redox reaction to proton translocation (for every two electrons transferred, four hydrogen ions are translocated across the cytoplasmic membrane), and thus conserves the redox energy in a proton gradient. The sequence is that of NADH-quinone oxidoreductase subunit C from Methylobacterium radiotolerans (strain ATCC 27329 / DSM 1819 / JCM 2831 / NBRC 15690 / NCIMB 10815 / 0-1).